Here is a 131-residue protein sequence, read N- to C-terminus: Large ribosomal subunit protein bL17 (131 aa).

Belongs to the bacterial ribosomal protein bL17 family. Part of the 50S ribosomal subunit. Contacts protein L32.

The protein is Large ribosomal subunit protein bL17 of Bordetella petrii (strain ATCC BAA-461 / DSM 12804 / CCUG 43448).